We begin with the raw amino-acid sequence, 315 residues long: Transcription factor MafAa (315 aa).

Residues 52-104 show a composition bias toward low complexity; it reads STPISTPCSSVPSSPSFCAPSPGSQPGQNLVNGVNNNNNNSGNGNNNTQGSSG. Disordered stretches follow at residues 52-108 and 169-191; these read STPI…KPQM and ATNGHHHPVHHHHHHHGHHAHAR. The span at 172–189 shows a compositional bias: basic residues; the sequence is GHHHPVHHHHHHHGHHAH. The segment at 223-248 is basic motif; the sequence is RLKQKRRTLKNRGYAQSCRYKRVQQR. In terms of domain architecture, bZIP spans 223–286; the sequence is RLKQKRRTLK…DLYKEKYEKL (64 aa). The interval 229–243 is interaction with DNA; sequence RTLKNRGYAQSCRYK. The leucine-zipper stretch occupies residues 251 to 272; sequence LESEKCTLQSQVEQLKQDVARL. Positions 290–315 are disordered; it reads AFNGGGNTRDPSSGNHVKTTSTDFFM. Residues 298–315 are compositionally biased toward polar residues; the sequence is RDPSSGNHVKTTSTDFFM.

This sequence belongs to the bZIP family. Maf subfamily.

The protein localises to the nucleus. Its function is as follows. Transcription factor, possibly involved in transcription regulation during lens development, including that of crystallin genes. Specifically binds to the alphaCE2 enhancer element of crystallin gene. In Danio rerio (Zebrafish), this protein is Transcription factor MafAa (mafaa).